Consider the following 997-residue polypeptide: Protein argonaute 5 (997 aa).

2 stretches are compositionally biased toward gly residues: residues 1-16 and 43-59; these read MSNRGGGGHGGASRGR and GGRGGSVSAGRGRGNVG. The tract at residues 1-144 is disordered; it reads MSNRGGGGHG…TSLPPASSKA (144 aa). Over residues 93–106 the composition is skewed to low complexity; sequence SVASSSKTVSVASS. Polar residues predominate over residues 116 to 129; that stretch reads VSETMSNLQITSTE. One can recognise a PAZ domain in the interval 360-471; sequence VVTDFISKFL…LPMELCQIDE (112 aa). A Piwi domain is found at 638–958; sequence LLIVILPDVT…AAFRARYYME (321 aa). Asp721 and Asp807 together coordinate a divalent metal cation. Interaction with guide RNA stretches follow at residues 847–848, 893–901, and 930–952; these read KR, HAGIQGTSR, and YARCTKSVSIVPPAYYAHLAAFR. An a divalent metal cation-binding site is contributed by His947.

It belongs to the argonaute family. Ago subfamily. Mg(2+) is required as a cofactor. Mn(2+) serves as cofactor.

Functionally, involved in RNA-mediated post-transcriptional gene silencing (PTGS). Main component of the RNA-induced silencing complex (RISC) that binds to a short guide RNA such as a microRNA (miRNA) or small interfering RNA (siRNA). RISC uses the mature miRNA or siRNA as a guide for slicer-directed cleavage of homologous mRNAs to repress gene expression. Associates with siRNAs of various sizes, from 21-24 nucleotide in length and preferentially recruits small RNAs with a 5' terminal cytosine. Probably involved in antiviral RNA silencing. Associates with siRNAs derived from cucumber mosaic virus (CMV). Targeted by the turnip yellows virus (TuYV) protein P0 (via F-box-like domain) for probable proteasome degradation and thereby inactivating AGO5 function in RNA silencing. The polypeptide is Protein argonaute 5 (AGO5) (Arabidopsis thaliana (Mouse-ear cress)).